The sequence spans 320 residues: Delta-aminolevulinic acid dehydratase (320 aa).

Zn(2+) is bound by residues cysteine 119, cysteine 121, and cysteine 129. Lysine 194 (schiff-base intermediate with substrate) is an active-site residue. Arginine 204 and arginine 216 together coordinate 5-aminolevulinate. Residue glutamate 232 participates in Mg(2+) binding. Lysine 247 functions as the Schiff-base intermediate with substrate in the catalytic mechanism. Residue serine 273 coordinates 5-aminolevulinate.

This sequence belongs to the ALAD family. In terms of assembly, homooctamer. Requires Zn(2+) as cofactor.

It carries out the reaction 2 5-aminolevulinate = porphobilinogen + 2 H2O + H(+). The protein operates within porphyrin-containing compound metabolism; protoporphyrin-IX biosynthesis; coproporphyrinogen-III from 5-aminolevulinate: step 1/4. In terms of biological role, catalyzes an early step in the biosynthesis of tetrapyrroles. Binds two molecules of 5-aminolevulinate per subunit, each at a distinct site, and catalyzes their condensation to form porphobilinogen. The chain is Delta-aminolevulinic acid dehydratase (hemB) from Methanothermus sociabilis.